We begin with the raw amino-acid sequence, 652 residues long: Trypanothione synthetase (652 aa).

Residues S34–I174 form the Peptidase C51 domain. R328–D330 is a binding site for ATP. Mg(2+) contacts are provided by D330, E344, and N346. Residues K513, K548, G555, Q583, and I618–T620 contribute to the ATP site.

This sequence in the C-terminal section; belongs to the glutathionylspermidine synthase preATP-grasp family. Mg(2+) serves as cofactor. In terms of processing, the N-terminus is blocked.

The enzyme catalyses spermidine + glutathione + ATP = glutathionylspermidine + ADP + phosphate + H(+). It catalyses the reaction glutathionylspermidine + glutathione + ATP = trypanothione + ADP + phosphate + H(+). Conjugates glutathione (gamma-Glu-Cys-Gly) and glutathionylspermidine to form trypanothione (N(1),N(8)-bis(glutathionyl)spermidine), which is involved in maintaining intracellular thiol redox and in defense against oxidants. The protein is Trypanothione synthetase (TRS) of Crithidia fasciculata.